The following is a 186-amino-acid chain: dCTP deaminase (186 aa).

107–112 serves as a coordination point for dCTP; that stretch reads KSTYAR. The active-site Proton donor/acceptor is Glu133. The dCTP site is built by Gln152, Tyr166, and Gln176.

This sequence belongs to the dCTP deaminase family. In terms of assembly, homotrimer.

The enzyme catalyses dCTP + H2O + H(+) = dUTP + NH4(+). The protein operates within pyrimidine metabolism; dUMP biosynthesis; dUMP from dCTP (dUTP route): step 1/2. Catalyzes the deamination of dCTP to dUTP. This Campylobacter jejuni subsp. doylei (strain ATCC BAA-1458 / RM4099 / 269.97) protein is dCTP deaminase.